A 684-amino-acid polypeptide reads, in one-letter code: Macrolide export ATP-binding/permease protein MacB (684 aa).

The 242-residue stretch at 2–243 (IQLYGLRKDY…RSRLANSRAE (242 aa)) folds into the ABC transporter domain. 38 to 45 (GSSGSGKT) contributes to the ATP binding site. Helical transmembrane passes span 248–268 (PASA…VLAL), 275–295 (TVLT…TMEL), 563–583 (LVIA…IMLV), 615–635 (VLCV…SVLV), and 644–664 (AMSI…GIVF).

The protein belongs to the ABC transporter superfamily. Macrolide exporter (TC 3.A.1.122) family. In terms of assembly, homodimer.

The protein resides in the cell inner membrane. Non-canonical ABC transporter that contains transmembrane domains (TMD), which form a pore in the inner membrane, and an ATP-binding domain (NBD), which is responsible for energy generation. Confers resistance against macrolides. The polypeptide is Macrolide export ATP-binding/permease protein MacB (Rhodopirellula baltica (strain DSM 10527 / NCIMB 13988 / SH1)).